A 495-amino-acid chain; its full sequence is AAA-ATPase At2g18193 (495 aa).

The chain crosses the membrane as a helical span at residues 7–28; that stretch reads FSFSPSSLFSAYASLTGFLMLF. 250–257 lines the ATP pocket; it reads GPPGTGKS. The tract at residues 451 to 495 is disordered; sequence EVSICKATDDDEKQNGSLGCVKKKKKGGKQKGKGKGKGKAKTYLI. Basic residues predominate over residues 471–495; it reads VKKKKKGGKQKGKGKGKGKAKTYLI.

The protein belongs to the AAA ATPase family. BCS1 subfamily. Mg(2+) serves as cofactor.

It localises to the membrane. It carries out the reaction ATP + H2O = ADP + phosphate + H(+). This is AAA-ATPase At2g18193 from Arabidopsis thaliana (Mouse-ear cress).